We begin with the raw amino-acid sequence, 103 residues long: Large ribosomal subunit protein uL24 (103 aa).

The protein belongs to the universal ribosomal protein uL24 family. As to quaternary structure, part of the 50S ribosomal subunit.

One of two assembly initiator proteins, it binds directly to the 5'-end of the 23S rRNA, where it nucleates assembly of the 50S subunit. Its function is as follows. One of the proteins that surrounds the polypeptide exit tunnel on the outside of the subunit. The protein is Large ribosomal subunit protein uL24 of Haemophilus influenzae (strain ATCC 51907 / DSM 11121 / KW20 / Rd).